A 331-amino-acid chain; its full sequence is Meiotic recombination protein W68 (331 aa).

A Topo IIA-type catalytic domain is found at 1–120 (MDEFSENIER…LGILAASKGL (120 aa)). Y81 (O-(5'-phospho-DNA)-tyrosine intermediate) is an active-site residue. Residues E167 and D221 each coordinate Mg(2+).

Belongs to the TOP6A family. Requires Mg(2+) as cofactor.

Its subcellular location is the nucleus. The catalysed reaction is ATP-dependent breakage, passage and rejoining of double-stranded DNA.. Functionally, required for meiotic recombination. Together with mei-P22, mediates DNA cleavage that forms the double-strand breaks (DSB) that initiate meiotic recombination. This chain is Meiotic recombination protein W68, found in Drosophila melanogaster (Fruit fly).